Reading from the N-terminus, the 540-residue chain is Sterol O-acyltransferase 1 (540 aa).

Residues 1–20 are disordered; sequence MSLRNRLSKSGENPEQDEAQ. Over 1-128 the chain is Cytoplasmic; that stretch reads MSLRNRLSKS…LDELFEVDHI (128 aa). Ser2 is subject to Phosphoserine. His127 lines the cholesterol pocket. The helical transmembrane segment at 129-150 threads the bilayer; sequence RTIYHMFIALLILFVLSTIVVD. The Lumenal portion of the chain corresponds to 151–170; that stretch reads YIDEGRLVLEFNLLAYAFGK. The helical transmembrane segment at 171–196 threads the bilayer; it reads FPTVIWTWWAMFLSTLSIPYFLFQRW. Topologically, residues 197 to 208 are cytoplasmic; that stretch reads AHGYSKSSHPLI. A helical transmembrane segment spans residues 209–234; sequence YSLVHGLLFLVFQLGVLGFVPTYVVL. Topologically, residues 235–242 are lumenal; the sequence is AYTLPPAS. The helical transmembrane segment at 243–266 threads the bilayer; it reads RFILILEQIRLIMKAHSFVRENIP. Over 267 to 309 the chain is Cytoplasmic; that stretch reads RVLNAAKEKSSKDPLPTVNQYLYFLFAPTLIYRDNYPRTPTVR. A helical membrane pass occupies residues 310–342; sequence WGYVAMQFLQVFGCLFYVYYIFERLCAPLFRNI. Residues 343 to 359 are Lumenal-facing; that stretch reads KQEPFSARVLVLCVFNS. Residues 360 to 385 traverse the membrane as a helical segment; that stretch reads ILPGVLILFLSFFAFLHCWLNAFAEM. The Cytoplasmic portion of the chain corresponds to 386 to 433; it reads LRFGDRMFYKDWWNSTSYSNYYRTWNVVVHDWLYYYVYKDLLWFFSKR. The FYXDWWN motif signature appears at 393–399; the sequence is FYKDWWN. An acyl-CoA contacts are provided by Asn405, Arg408, Asn411, His415, Tyr423, Lys435, and Ser446. Residues 434–458 traverse the membrane as a helical segment; the sequence is FKSAAMLAVFALSAVVHEYALAICL. The active site involves His450. The Lumenal segment spans residues 459 to 464; sequence SYFYPV. A helical membrane pass occupies residues 465 to 480; the sequence is LFVLFMFFGMAFNFIV. Residues 481–486 are Cytoplasmic-facing; it reads NDSRKR. Residues 487-518 traverse the membrane as a helical segment; that stretch reads PIWNIMVWASLFLGYGLILCFYSQEWYARQHC. A disulfide bridge links Cys518 with Cys536. Residues 519–540 are Lumenal-facing; sequence PLKNPTFLDYVRPRTWTCRYVF.

The protein belongs to the membrane-bound acyltransferase family. Sterol o-acyltransferase subfamily. In terms of assembly, may form homo- or heterodimers. Interacts with UBIAD1.

It is found in the endoplasmic reticulum membrane. It catalyses the reaction a sterol + a long-chain fatty acyl-CoA = a long-chain 3-hydroxysterol ester + CoA. The catalysed reaction is cholesterol + an acyl-CoA = a cholesterol ester + CoA. The enzyme catalyses cholesterol + (9Z)-octadecenoyl-CoA = cholesteryl (9Z-octadecenoate) + CoA. It carries out the reaction cholesterol + hexadecanoyl-CoA = cholesteryl hexadecanoate + CoA. It catalyses the reaction octadecanoyl-CoA + cholesterol = cholesteryl octadecanoate + CoA. The catalysed reaction is (9Z,12Z)-octadecadienoyl-CoA + cholesterol = cholesteryl (9Z,12Z)-octadecadienoate + CoA. The enzyme catalyses (5Z,8Z,11Z,14Z)-eicosatetraenoyl-CoA + cholesterol = cholesteryl (5Z,8Z,11Z,14Z)-eicosatetraenoate + CoA. It carries out the reaction (9Z)-hexadecenoyl-CoA + cholesterol = cholesteryl (9Z)-hexadecenoate + CoA. It catalyses the reaction (11Z)-octadecenoyl-CoA + cholesterol = cholesteryl (11Z)-octadecenoate + CoA. The catalysed reaction is (7Z)-octadecenoyl-CoA + cholesterol = cholesteryl (7Z)-octadecenoate + CoA. Functionally, catalyzes the formation of fatty acid-cholesterol esters, which are less soluble in membranes than cholesterol. Plays a role in lipoprotein assembly and dietary cholesterol absorption. Preferentially utilizes oleoyl-CoA ((9Z)-octadecenoyl-CoA) as a substrate: shows a higher activity towards an acyl-CoA substrate with a double bond at the delta-9 position (9Z) than towards saturated acyl-CoA or an unsaturated acyl-CoA with a double bond at the delta-7 (7Z) or delta-11 (11Z) positions. This chain is Sterol O-acyltransferase 1, found in Mus musculus (Mouse).